Reading from the N-terminus, the 631-residue chain is Bromodomain-containing protein 9 (631 aa).

Disordered stretches follow at residues 1 to 26 (MGKK…PLEK) and 39 to 116 (VTEL…TLPK). Basic and acidic residues-rich tracts occupy residues 9–26 (RPEW…PLEK) and 50–63 (SYYD…WERH). Residues 64–73 (KEKKKKKKKK) show a composition bias toward basic residues. Over residues 74-85 (SEKEKYADDDER) the composition is skewed to basic and acidic residues. The span at 86 to 96 (RRRKEEKKKKR) shows a compositional bias: basic residues. The Bromo domain occupies 166-270 (NEATPHQQLL…HTGFKMMSKQ (105 aa)). The interval 244 to 246 (VYN) is histone H4K5ac H4K8ac and histone H4K5bu H4K8bu binding. Positions 571–631 (ASVDRVGSRP…SPEPGSTANS (61 aa)) are disordered. Over residues 581–590 (SSNLSSLSNA) the composition is skewed to low complexity.

As to quaternary structure, binds acetylated histones H3 and H4. Binds butyrylated histone H4.

It is found in the nucleus. In terms of biological role, plays a role in chromatin remodeling and regulation of transcription. Acts as a chromatin reader that recognizes and binds acylated histones: binds histones that are acetylated and/or butyrylated. This Danio rerio (Zebrafish) protein is Bromodomain-containing protein 9 (brd9).